The chain runs to 304 residues: Protease HtpX homolog (304 aa).

A run of 2 helical transmembrane segments spans residues 14–34 (IFII…IGII) and 39–59 (YLNG…IMVM). Zn(2+) is bound at residue histidine 144. The active site involves glutamate 145. Histidine 148 provides a ligand contact to Zn(2+). A run of 2 helical transmembrane segments spans residues 159 to 179 (IAIA…RMIF) and 202 to 222 (AIIY…ATAI). Residue glutamate 231 coordinates Zn(2+).

This sequence belongs to the peptidase M48B family. Zn(2+) is required as a cofactor.

It localises to the cell membrane. In Listeria monocytogenes serotype 4b (strain CLIP80459), this protein is Protease HtpX homolog.